The primary structure comprises 305 residues: uncharacterized protein (305 aa).

The N-terminal stretch at Met-1–Ser-29 is a signal peptide. Cys-30 carries the N-palmitoyl cysteine lipid modification. Residue Cys-30 is the site of S-diacylglycerol cysteine attachment. The segment at Phe-234–Ala-265 is disordered. A compositionally biased stretch (polar residues) spans Pro-237–Asn-258.

Its subcellular location is the cell membrane. This is an uncharacterized protein from Mycoplasma pneumoniae (strain ATCC 29342 / M129 / Subtype 1) (Mycoplasmoides pneumoniae).